Here is a 183-residue protein sequence, read N- to C-terminus: MHLLPELASHHAVSIPELLVSRDERQARQHVWLKRHPVPLVSFTVVAPGPIKDSEVTRRIFNHGVTALRALAAKQGWQIQEQAALVSASGPEGMLSIAAPARDLKLATIELEHSHPLGRLWDIDVLTPEGEILSRRDYSLPPRRCLLCEQSAAVCARGKTHQLTDLLNRMEALLNDVDACNVN.

This sequence belongs to the CitX family.

It carries out the reaction apo-[citrate lyase ACP] + 2'-(5''-triphospho-alpha-D-ribosyl)-3'-dephospho-CoA = holo-[citrate lyase ACP] + diphosphate. In terms of biological role, transfers 2-(5''-triphosphoribosyl)-3'-dephosphocoenzyme-A on a serine residue to the apo-acyl carrier protein (gamma chain) of the citrate lyase to yield holo-acyl carrier protein. The sequence is that of Probable apo-citrate lyase phosphoribosyl-dephospho-CoA transferase from Escherichia coli (strain 55989 / EAEC).